Reading from the N-terminus, the 199-residue chain is Imidazole glycerol phosphate synthase subunit HisH (199 aa).

The region spanning 1-199 (MTVVVDYEMG…QILKNLREML (199 aa)) is the Glutamine amidotransferase type-1 domain. Residue Cys-79 is the Nucleophile of the active site. Active-site residues include His-180 and Glu-182.

As to quaternary structure, heterodimer of HisH and HisF.

The protein resides in the cytoplasm. The enzyme catalyses 5-[(5-phospho-1-deoxy-D-ribulos-1-ylimino)methylamino]-1-(5-phospho-beta-D-ribosyl)imidazole-4-carboxamide + L-glutamine = D-erythro-1-(imidazol-4-yl)glycerol 3-phosphate + 5-amino-1-(5-phospho-beta-D-ribosyl)imidazole-4-carboxamide + L-glutamate + H(+). The catalysed reaction is L-glutamine + H2O = L-glutamate + NH4(+). It functions in the pathway amino-acid biosynthesis; L-histidine biosynthesis; L-histidine from 5-phospho-alpha-D-ribose 1-diphosphate: step 5/9. Functionally, IGPS catalyzes the conversion of PRFAR and glutamine to IGP, AICAR and glutamate. The HisH subunit catalyzes the hydrolysis of glutamine to glutamate and ammonia as part of the synthesis of IGP and AICAR. The resulting ammonia molecule is channeled to the active site of HisF. The sequence is that of Imidazole glycerol phosphate synthase subunit HisH from Carboxydothermus hydrogenoformans (strain ATCC BAA-161 / DSM 6008 / Z-2901).